The primary structure comprises 73 residues: DNA-directed RNA polymerase subunit omega (73 aa).

It belongs to the RNA polymerase subunit omega family. In terms of assembly, in cyanobacteria the RNAP catalytic core is composed of 2 alpha, 1 beta, 1 beta', 1 gamma and 1 omega subunit. When a sigma factor is associated with the core the holoenzyme is formed, which can initiate transcription.

It carries out the reaction RNA(n) + a ribonucleoside 5'-triphosphate = RNA(n+1) + diphosphate. In terms of biological role, promotes RNA polymerase assembly. Latches the N- and C-terminal regions of the beta' subunit thereby facilitating its interaction with the beta and alpha subunits. The protein is DNA-directed RNA polymerase subunit omega of Gloeobacter violaceus (strain ATCC 29082 / PCC 7421).